Consider the following 336-residue polypeptide: Alcohol dehydrogenase (336 aa).

Residues Cys-37, His-58, Cys-89, Cys-92, Cys-95, Cys-103, and Cys-145 each coordinate Zn(2+).

This sequence belongs to the zinc-containing alcohol dehydrogenase family. Zn(2+) is required as a cofactor.

It carries out the reaction a primary alcohol + NAD(+) = an aldehyde + NADH + H(+). The enzyme catalyses a secondary alcohol + NAD(+) = a ketone + NADH + H(+). In Staphylococcus aureus (strain USA300), this protein is Alcohol dehydrogenase (adh).